Reading from the N-terminus, the 225-residue chain is UPF0725 protein At5g63820 (225 aa).

The protein belongs to the UPF0725 (EMB2204) family.

The protein is UPF0725 protein At5g63820 of Arabidopsis thaliana (Mouse-ear cress).